The chain runs to 236 residues: UPF0502 protein Bcenmc03_4618 (236 aa).

It belongs to the UPF0502 family.

The chain is UPF0502 protein Bcenmc03_4618 from Burkholderia orbicola (strain MC0-3).